We begin with the raw amino-acid sequence, 640 residues long: 1,4-alpha-glucan branching enzyme GlgB (640 aa).

Catalysis depends on Asp318, which acts as the Nucleophile. The Proton donor role is filled by Glu371.

The protein belongs to the glycosyl hydrolase 13 family. GlgB subfamily. As to quaternary structure, monomer.

The enzyme catalyses Transfers a segment of a (1-&gt;4)-alpha-D-glucan chain to a primary hydroxy group in a similar glucan chain.. It participates in glycan biosynthesis; glycogen biosynthesis. In terms of biological role, catalyzes the formation of the alpha-1,6-glucosidic linkages in glycogen by scission of a 1,4-alpha-linked oligosaccharide from growing alpha-1,4-glucan chains and the subsequent attachment of the oligosaccharide to the alpha-1,6 position. The polypeptide is 1,4-alpha-glucan branching enzyme GlgB (Francisella tularensis subsp. novicida (strain U112)).